We begin with the raw amino-acid sequence, 367 residues long: Pectate lyase 1 (367 aa).

Residues 1 to 21 (MASPCLIAFLVFLCAIVSCCS) form the signal peptide. 2 disulfide bridges follow: Cys-28/Cys-45 and Cys-128/Cys-147. Asn-148 carries N-linked (GlcNAc...) asparagine glycosylation. Asp-170 provides a ligand contact to Ca(2+). Residue Asn-178 is glycosylated (N-linked (GlcNAc...) asparagine). Positions 194 and 198 each coordinate Ca(2+). Arg-250 is an active-site residue. An intrachain disulfide couples Cys-306 to Cys-312.

This sequence belongs to the polysaccharide lyase 1 family. Amb a subfamily. It depends on Ca(2+) as a cofactor.

It catalyses the reaction Eliminative cleavage of (1-&gt;4)-alpha-D-galacturonan to give oligosaccharides with 4-deoxy-alpha-D-galact-4-enuronosyl groups at their non-reducing ends.. It participates in glycan metabolism; pectin degradation; 2-dehydro-3-deoxy-D-gluconate from pectin: step 2/5. Functionally, has pectate lyase activity. This is Pectate lyase 1 from Juniperus virginiana (Eastern redcedar).